The sequence spans 161 residues: MALDATFYALVGLILFFVLIAYLKVPGMVGKALDARADKISNELAEAKRLREEAQSLVAEYQRKRKDAEAEAASIVAAAQREAEMLTAEAKQKTEEYVARRTALSEQKIKQAESDAINAVRAAAVDLAISAAEKVLASKADAGAQETLFKKAIGEVKARLN.

Residues 3 to 23 (LDATFYALVGLILFFVLIAYL) form a helical membrane-spanning segment.

It belongs to the ATPase B chain family. F-type ATPases have 2 components, F(1) - the catalytic core - and F(0) - the membrane proton channel. F(1) has five subunits: alpha(3), beta(3), gamma(1), delta(1), epsilon(1). F(0) has three main subunits: a(1), b(2) and c(10-14). The alpha and beta chains form an alternating ring which encloses part of the gamma chain. F(1) is attached to F(0) by a central stalk formed by the gamma and epsilon chains, while a peripheral stalk is formed by the delta and b chains.

The protein resides in the cell inner membrane. Its function is as follows. F(1)F(0) ATP synthase produces ATP from ADP in the presence of a proton or sodium gradient. F-type ATPases consist of two structural domains, F(1) containing the extramembraneous catalytic core and F(0) containing the membrane proton channel, linked together by a central stalk and a peripheral stalk. During catalysis, ATP synthesis in the catalytic domain of F(1) is coupled via a rotary mechanism of the central stalk subunits to proton translocation. In terms of biological role, component of the F(0) channel, it forms part of the peripheral stalk, linking F(1) to F(0). The polypeptide is ATP synthase subunit b 1 (Rhizobium meliloti (strain 1021) (Ensifer meliloti)).